Consider the following 146-residue polypeptide: Snaclec mamushigin subunit beta (146 aa).

The N-terminal stretch at 1-23 (MGRFIFLSFGLLVVFVSLSGTGA) is a signal peptide. 3 disulfide bridges follow: C25–C36, C53–C142, and C119–C134. Residues 32 to 143 (YEGHCYRVFQ…CSRTYNVVCK (112 aa)) form the C-type lectin domain.

Heterodimer of subunits alpha and beta; disulfide-linked. Expressed by the venom gland.

The protein resides in the secreted. In terms of biological role, binds to platelet GPIbalpha (GP1BA) and enhances platelet aggregation at low-shear stress. At high-shear stress, blocks platelet aggregation in a dose-dependent manner. This Gloydius blomhoffii (Mamushi) protein is Snaclec mamushigin subunit beta.